Reading from the N-terminus, the 124-residue chain is Small ribosomal subunit protein uS12 (124 aa).

At D89 the chain carries 3-methylthioaspartic acid.

The protein belongs to the universal ribosomal protein uS12 family. In terms of assembly, part of the 30S ribosomal subunit. Contacts proteins S8 and S17. May interact with IF1 in the 30S initiation complex.

Functionally, with S4 and S5 plays an important role in translational accuracy. Its function is as follows. Interacts with and stabilizes bases of the 16S rRNA that are involved in tRNA selection in the A site and with the mRNA backbone. Located at the interface of the 30S and 50S subunits, it traverses the body of the 30S subunit contacting proteins on the other side and probably holding the rRNA structure together. The combined cluster of proteins S8, S12 and S17 appears to hold together the shoulder and platform of the 30S subunit. The sequence is that of Small ribosomal subunit protein uS12 from Koribacter versatilis (strain Ellin345).